Here is a 358-residue protein sequence, read N- to C-terminus: 4-hydroxy-2-oxovalerate aldolase 2 (358 aa).

Residues 16–268 (VLLHDMCLRD…ETGVDLFKLM (253 aa)) form the Pyruvate carboxyltransferase domain. 24 to 25 (RD) contributes to the substrate binding site. Asp25 contacts Mn(2+). His28 serves as the catalytic Proton acceptor. Substrate-binding residues include Ser178 and His207. His207 and His209 together coordinate Mn(2+). Substrate is bound at residue Tyr298.

The protein belongs to the 4-hydroxy-2-oxovalerate aldolase family.

The enzyme catalyses (S)-4-hydroxy-2-oxopentanoate = acetaldehyde + pyruvate. The protein is 4-hydroxy-2-oxovalerate aldolase 2 of Methylibium petroleiphilum (strain ATCC BAA-1232 / LMG 22953 / PM1).